We begin with the raw amino-acid sequence, 310 residues long: Putative sugar kinase PH1459 (310 aa).

Residues Lys-194, Thr-219, and Gly-224 each contribute to the ATP site.

This sequence belongs to the carbohydrate kinase PfkB family.

This Pyrococcus horikoshii (strain ATCC 700860 / DSM 12428 / JCM 9974 / NBRC 100139 / OT-3) protein is Putative sugar kinase PH1459.